The following is a 405-amino-acid chain: Putative colanic acid biosynthesis glycosyl transferase WcaC (405 aa).

The protein operates within slime biogenesis; slime polysaccharide biosynthesis. The chain is Putative colanic acid biosynthesis glycosyl transferase WcaC (wcaC) from Escherichia coli (strain K12).